A 426-amino-acid chain; its full sequence is Serine--tRNA ligase (426 aa).

229–231 (TAE) provides a ligand contact to L-serine. ATP is bound by residues 260-262 (RTE) and Val276. Glu283 lines the L-serine pocket. Residue 350–353 (EVTS) coordinates ATP. Thr386 lines the L-serine pocket.

Belongs to the class-II aminoacyl-tRNA synthetase family. Type-1 seryl-tRNA synthetase subfamily. Homodimer. The tRNA molecule binds across the dimer.

It is found in the cytoplasm. It catalyses the reaction tRNA(Ser) + L-serine + ATP = L-seryl-tRNA(Ser) + AMP + diphosphate + H(+). The enzyme catalyses tRNA(Sec) + L-serine + ATP = L-seryl-tRNA(Sec) + AMP + diphosphate + H(+). The protein operates within aminoacyl-tRNA biosynthesis; selenocysteinyl-tRNA(Sec) biosynthesis; L-seryl-tRNA(Sec) from L-serine and tRNA(Sec): step 1/1. In terms of biological role, catalyzes the attachment of serine to tRNA(Ser). Is also able to aminoacylate tRNA(Sec) with serine, to form the misacylated tRNA L-seryl-tRNA(Sec), which will be further converted into selenocysteinyl-tRNA(Sec). This Rhodopirellula baltica (strain DSM 10527 / NCIMB 13988 / SH1) protein is Serine--tRNA ligase.